The following is a 613-amino-acid chain: Threonine--tRNA ligase (613 aa).

Positions 1-147 (MRLLLIHARS…TITPQESAPQ (147 aa)) are editing domain. Catalytic stretches follow at residues 199 to 495 (PRYI…PALP) and 200 to 495 (RYID…PALP). Residues C292, H343, and H464 each coordinate Zn(2+).

The protein belongs to the class-II aminoacyl-tRNA synthetase family. Homodimer. Zn(2+) serves as cofactor.

The protein resides in the cytoplasm. It carries out the reaction tRNA(Thr) + L-threonine + ATP = L-threonyl-tRNA(Thr) + AMP + diphosphate + H(+). Functionally, catalyzes the attachment of threonine to tRNA(Thr) in a two-step reaction: L-threonine is first activated by ATP to form Thr-AMP and then transferred to the acceptor end of tRNA(Thr). Also edits incorrectly charged L-seryl-tRNA(Thr). The protein is Threonine--tRNA ligase of Caldivirga maquilingensis (strain ATCC 700844 / DSM 13496 / JCM 10307 / IC-167).